Reading from the N-terminus, the 226-residue chain is Probable peroxiredoxin prdx-3 (226 aa).

A Thioredoxin domain is found at 33-191; that stretch reads LGPKNTVPAF…TLRVLKAFQF (159 aa). The active-site Cysteine sulfenic acid (-SOH) intermediate is Cys78.

This sequence belongs to the peroxiredoxin family. AhpC/Prx1 subfamily. In terms of assembly, homodimer; disulfide-linked, upon oxidation.

The enzyme catalyses a hydroperoxide + [thioredoxin]-dithiol = an alcohol + [thioredoxin]-disulfide + H2O. Thiol-specific peroxidase that catalyzes the reduction of hydrogen peroxide and organic hydroperoxides to water and alcohols, respectively. Plays a role in cell protection against oxidative stress by detoxifying peroxides and as sensor of hydrogen peroxide-mediated signaling events. The chain is Probable peroxiredoxin prdx-3 (prdx-3) from Caenorhabditis elegans.